The sequence spans 1219 residues: Regulator of telomere elongation helicase 1 (1219 aa).

The Helicase ATP-binding domain occupies 7–296 (NGVTVDFPFQ…TKAAQQGEPH (290 aa)). 42–49 (SPTGTGKT) contributes to the ATP binding site. Cys-145, Cys-163, Cys-172, and Cys-207 together coordinate [4Fe-4S] cluster. Residues 151–167 (KKQESNHLQIHLCRKKV) carry the Nuclear localization signal motif. A DEAH box motif is present at residues 250–253 (DEAH). Disordered regions lie at residues 287–306 (TKAA…SPSP), 757–786 (PAPA…FFST), 839–877 (EHSE…GRKK), 979–1005 (RPEH…PDPK), 1017–1054 (DPQE…RAGK), 1132–1151 (CTDL…PQEE), and 1159–1219 (LTHR…EWGL). Positions 757–766 (PAPAPRATAP) are enriched in low complexity. A compositionally biased stretch (basic and acidic residues) spans 863-873 (SEKRPAEEPRG). The short motif at 871–877 (PRGGRKK) is the Nuclear localization signal element. Residues 1176 to 1185 (KTQSKISSFL) show a composition bias toward polar residues. The PIP-box motif lies at 1178-1185 (QSKISSFL). A compositionally biased stretch (low complexity) spans 1200-1219 (AGPSQSSGPPHGPAASEWGL).

This sequence belongs to the helicase family. RAD3/XPD subfamily. As to quaternary structure, interacts with TERF1. Interacts (via PIP-box) with PCNA; the interaction is direct and essential for suppressing telomere fragility. Interacts with MMS19; the interaction mediates the association of RTEL1 with the cytosolic iron-sulfur protein assembly (CIA) complex.

The protein resides in the nucleus. It catalyses the reaction ATP + H2O = ADP + phosphate + H(+). In terms of biological role, a probable ATP-dependent DNA helicase implicated in telomere-length regulation, DNA repair and the maintenance of genomic stability. Acts as an anti-recombinase to counteract toxic recombination and limit crossover during meiosis. Regulates meiotic recombination and crossover homeostasis by physically dissociating strand invasion events and thereby promotes noncrossover repair by meiotic synthesis dependent strand annealing (SDSA) as well as disassembly of D loop recombination intermediates. Also disassembles T loops and prevents telomere fragility by counteracting telomeric G4-DNA structures, which together ensure the dynamics and stability of the telomere. The chain is Regulator of telomere elongation helicase 1 from Homo sapiens (Human).